Reading from the N-terminus, the 109-residue chain is Parvalbumin beta 2 (109 aa).

A2 bears the N-acetylalanine mark. 2 EF-hand domains span residues 39–74 and 78–109; these read KSPADIKKVFEIIDQDKSDFVEEDELKLFLQNFSAG and LSDAETKVFLKAGDSDGDGKIGVDEFGAMIKA. Residues D52, D54, S56, F58, E60, E63, D91, D93, D95, K97, and E102 each coordinate Ca(2+).

It belongs to the parvalbumin family. Monomer.

In terms of biological role, in muscle, parvalbumin is thought to be involved in relaxation after contraction. It binds two calcium ions. The protein is Parvalbumin beta 2 of Gadus morhua (Atlantic cod).